Here is a 650-residue protein sequence, read N- to C-terminus: DNA-directed RNA polymerase III subunit rpc3 (650 aa).

Disordered stretches follow at residues 133 to 163, 264 to 283, 288 to 313, and 400 to 440; these read PTAV…EGHT, RGAK…KKAR, AVDE…NIPM, and LAGS…SSDG. Acidic residues predominate over residues 149-158; sequence GEGVEGEGIE. The span at 288–307 shows a compositional bias: acidic residues; the sequence is AVDEDEEEEEENEWSEDEMG. The tract at residues 577–598 is leucine-zipper; it reads TYKSMSRCLQRLRFERNRLKEF.

The protein belongs to the RNA polymerase beta chain family. In terms of assembly, component of the RNA polymerase III (Pol III) complex consisting of 17 subunits.

The protein resides in the nucleus. Its function is as follows. DNA-dependent RNA polymerase catalyzes the transcription of DNA into RNA using the four ribonucleoside triphosphates as substrates. Specific core component of RNA polymerase III which synthesizes small RNAs, such as 5S rRNA and tRNAs. The protein is DNA-directed RNA polymerase III subunit rpc3 (rpc82) of Aspergillus terreus (strain NIH 2624 / FGSC A1156).